The primary structure comprises 194 residues: Adenine phosphoribosyltransferase (194 aa).

Belongs to the purine/pyrimidine phosphoribosyltransferase family. In terms of assembly, homodimer.

Its subcellular location is the cytoplasm. The enzyme catalyses AMP + diphosphate = 5-phospho-alpha-D-ribose 1-diphosphate + adenine. It functions in the pathway purine metabolism; AMP biosynthesis via salvage pathway; AMP from adenine: step 1/1. In terms of biological role, catalyzes a salvage reaction resulting in the formation of AMP, that is energically less costly than de novo synthesis. The polypeptide is Adenine phosphoribosyltransferase (Albidiferax ferrireducens (strain ATCC BAA-621 / DSM 15236 / T118) (Rhodoferax ferrireducens)).